Here is a 224-residue protein sequence, read N- to C-terminus: Cytidylate kinase (224 aa).

11–19 (GPAAAGKST) contributes to the ATP binding site.

Belongs to the cytidylate kinase family. Type 1 subfamily.

It localises to the cytoplasm. The catalysed reaction is CMP + ATP = CDP + ADP. The enzyme catalyses dCMP + ATP = dCDP + ADP. The chain is Cytidylate kinase from Geobacillus sp. (strain WCH70).